Reading from the N-terminus, the 354-residue chain is Biotin synthase (354 aa).

Residues 40–258 form the Radical SAM core domain; the sequence is NEVQVSTLLS…IAVARILMPR (219 aa). [4Fe-4S] cluster contacts are provided by cysteine 55, cysteine 59, and cysteine 62. Residues cysteine 99, cysteine 130, cysteine 190, and arginine 262 each contribute to the [2Fe-2S] cluster site.

It belongs to the radical SAM superfamily. Biotin synthase family. In terms of assembly, homodimer. The cofactor is [4Fe-4S] cluster. Requires [2Fe-2S] cluster as cofactor.

It catalyses the reaction (4R,5S)-dethiobiotin + (sulfur carrier)-SH + 2 reduced [2Fe-2S]-[ferredoxin] + 2 S-adenosyl-L-methionine = (sulfur carrier)-H + biotin + 2 5'-deoxyadenosine + 2 L-methionine + 2 oxidized [2Fe-2S]-[ferredoxin]. Its pathway is cofactor biosynthesis; biotin biosynthesis; biotin from 7,8-diaminononanoate: step 2/2. In terms of biological role, catalyzes the conversion of dethiobiotin (DTB) to biotin by the insertion of a sulfur atom into dethiobiotin via a radical-based mechanism. The chain is Biotin synthase from Hahella chejuensis (strain KCTC 2396).